The chain runs to 476 residues: Protein transport protein Sec61 subunit alpha (476 aa).

The Cytoplasmic segment spans residues 2–33 (GIKFLEFIKPFCAVLPEIQKPERKIQFREKVL). A helical transmembrane segment spans residues 34 to 53 (WTAITLFIFLVCCQIPLFGI). The Lumenal portion of the chain corresponds to 54-76 (MSSDSADPFYWMRVILASNRGTL). The chain crosses the membrane as a helical span at residues 77 to 96 (MELGISPIVTSGLIMQLLAG). At 97–117 (AKIIEVGDTPKDRALFNGAQK) the chain is on the cytoplasmic side. A helical membrane pass occupies residues 118–138 (LFGMIITIGQAIVYVMTGMYG). The Lumenal portion of the chain corresponds to 139-144 (DPSEMG). A helical membrane pass occupies residues 145-165 (AGICLLIIIQLFVAGLIVLLL). Residues 166 to 172 (DELLQKG) lie on the Cytoplasmic side of the membrane. Residues 173 to 193 (YGLGSGISLFIATNICETIVW) traverse the membrane as a helical segment. Residues 194–240 (KAFSPTTVNTGRGTEFEGAIIALFHLLATRTDKVRALREAFYRQNLP) are Lumenal-facing. Residues 241 to 261 (NILNLIATVFVFAVVIYFQGF) form a helical membrane-spanning segment. The Cytoplasmic segment spans residues 262–288 (RVDLPIKSARYRGQYNTYPIKLFYTSN). A helical membrane pass occupies residues 289–309 (IPIILQSALVSNLYVISQMLS). Topologically, residues 310-354 (TRFSGNFLVNLLGTWSDATSGGPARAYPVAGLCYYLSPPESFGSV) are lumenal. A helical membrane pass occupies residues 355–375 (LDDPVHAAIYIVFMLGSCAFF). At 376–420 (SKTWIEVSGSSAKDVAKQLKEQQMVMRGHRETSMVHELNRYIPTA) the chain is on the cytoplasmic side. Residues 421-441 (AAFGGLCIGGLSVMADFLGAI) form a helical membrane-spanning segment. At 442–445 (GSGT) the chain is on the lumenal side. Residues 446–462 (GILLAVTIIYQYFEIFV) form a helical membrane-spanning segment. Residues 463–476 (KEQSEMGSMGALLF) are Cytoplasmic-facing.

The protein belongs to the SecY/SEC61-alpha family. The SEC61 channel-forming translocon complex consists of channel-forming core components SEC61A1, SEC61B and SEC61G and different auxiliary components such as SEC62 and SEC63. The SEC61 channel associates with the multi-pass translocon (MPT) complex.

Its subcellular location is the endoplasmic reticulum membrane. Component of SEC61 channel-forming translocon complex that mediates transport of signal peptide-containing precursor polypeptides across the endoplasmic reticulum (ER). Forms a ribosome receptor and a gated pore in the ER membrane, both functions required for cotranslational translocation of nascent polypeptides. May cooperate with auxiliary protein SEC62, SEC63 and HSPA5/BiP to enable post-translational transport of small presecretory proteins. The SEC61 channel is also involved in ER membrane insertion of transmembrane proteins: it mediates membrane insertion of the first few transmembrane segments of proteins, while insertion of subsequent transmembrane regions of multi-pass membrane proteins is mediated by the multi-pass translocon (MPT) complex. The protein is Protein transport protein Sec61 subunit alpha (sec61a) of Notothenia angustata (Rockcod).